Here is a 189-residue protein sequence, read N- to C-terminus: Glycerol-3-phosphate acyltransferase (189 aa).

Helical transmembrane passes span M1–L21, K50–A70, W72–L92, M111–F131, and L151–V171.

Belongs to the PlsY family. Probably interacts with PlsX.

It localises to the cell inner membrane. It catalyses the reaction an acyl phosphate + sn-glycerol 3-phosphate = a 1-acyl-sn-glycero-3-phosphate + phosphate. Its pathway is lipid metabolism; phospholipid metabolism. Catalyzes the transfer of an acyl group from acyl-phosphate (acyl-PO(4)) to glycerol-3-phosphate (G3P) to form lysophosphatidic acid (LPA). This enzyme utilizes acyl-phosphate as fatty acyl donor, but not acyl-CoA or acyl-ACP. In Pseudomonas aeruginosa (strain LESB58), this protein is Glycerol-3-phosphate acyltransferase.